Consider the following 390-residue polypeptide: 8-amino-7-oxononanoate synthase (390 aa).

Residue arginine 19 coordinates substrate. 106-107 (GY) is a pyridoxal 5'-phosphate binding site. Residue histidine 131 participates in substrate binding. Pyridoxal 5'-phosphate contacts are provided by serine 176, histidine 204, and threonine 233. N6-(pyridoxal phosphate)lysine is present on lysine 236. Threonine 350 contributes to the substrate binding site.

Belongs to the class-II pyridoxal-phosphate-dependent aminotransferase family. BioF subfamily. In terms of assembly, homodimer. Pyridoxal 5'-phosphate serves as cofactor.

It catalyses the reaction 6-carboxyhexanoyl-[ACP] + L-alanine + H(+) = (8S)-8-amino-7-oxononanoate + holo-[ACP] + CO2. It functions in the pathway cofactor biosynthesis; biotin biosynthesis. Catalyzes the decarboxylative condensation of pimeloyl-[acyl-carrier protein] and L-alanine to produce 8-amino-7-oxononanoate (AON), [acyl-carrier protein], and carbon dioxide. The polypeptide is 8-amino-7-oxononanoate synthase (Pseudomonas putida (strain ATCC 700007 / DSM 6899 / JCM 31910 / BCRC 17059 / LMG 24140 / F1)).